The primary structure comprises 352 residues: Ion-translocating oxidoreductase complex subunit D (352 aa).

5 consecutive transmembrane segments (helical) span residues 20 to 40 (IMLL…WFFG), 42 to 62 (GTLV…ALVL), 68 to 88 (PIAA…LAVS), 89 to 109 (IPPL…VIIA), and 123 to 143 (PAMI…TNWL). The residue at position 187 (Thr-187) is an FMN phosphoryl threonine. Transmembrane regions (helical) follow at residues 217-237 (GAGW…LLAI), 244-264 (IPVS…LFAP), 267-287 (LASP…FFIL), 301-321 (LIFG…GGYP), and 322-342 (DGVA…DYYT).

The protein belongs to the NqrB/RnfD family. The complex is composed of six subunits: RsxA, RsxB, RsxC, RsxD, RsxE and RsxG. FMN serves as cofactor.

It localises to the cell inner membrane. Its function is as follows. Part of a membrane-bound complex that couples electron transfer with translocation of ions across the membrane. Required to maintain the reduced state of SoxR. In Escherichia fergusonii (strain ATCC 35469 / DSM 13698 / CCUG 18766 / IAM 14443 / JCM 21226 / LMG 7866 / NBRC 102419 / NCTC 12128 / CDC 0568-73), this protein is Ion-translocating oxidoreductase complex subunit D.